The primary structure comprises 511 residues: Probable eukaryotic translation initiation factor 4H (511 aa).

Disordered regions lie at residues 25-63 (SWAD…DRGS) and 154-511 (TIRV…EVKI). Basic and acidic residues predominate over residues 39-51 (AREESGSGLKRGD). Residues 86 to 162 (FTAFIGNLSF…RTIRVNVAEA (77 aa)) form the RRM domain. Positions 179-196 (WRRSTPLASRESSSQPSR) are enriched in polar residues. 2 stretches are compositionally biased toward basic and acidic residues: residues 230–247 (VRRD…RDPG) and 261–270 (LAEKVDRDVP). Residues 285 to 318 (LADTEQTWSRGTKLRTPTTTSRQSSADSTPSSGA) show a composition bias toward polar residues. The segment covering 331–349 (TAGSPSATANATPAAPASG) has biased composition (low complexity). Ser-334 carries the post-translational modification Phosphoserine. 2 stretches are compositionally biased toward basic and acidic residues: residues 360–388 (AARE…EKQK) and 394–419 (KPVE…DKVA). Residues 420-434 (GKPTTAPATTTNTGA) are compositionally biased toward low complexity. The segment covering 438 to 448 (GSADRAKKDEQ) has biased composition (basic and acidic residues). Residues 451-467 (EQVQPSRKSSQTGATSE) are compositionally biased toward polar residues. The span at 502-511 (VTKGVEEVKI) shows a compositional bias: basic and acidic residues.

The protein localises to the cytoplasm. Its subcellular location is the P-body. Functionally, probable translation initiation factor. The sequence is that of Probable eukaryotic translation initiation factor 4H from Cryptococcus neoformans var. grubii serotype A (strain H99 / ATCC 208821 / CBS 10515 / FGSC 9487) (Filobasidiella neoformans var. grubii).